A 189-amino-acid polypeptide reads, in one-letter code: Putative L,D-transpeptidase in ATP synthase subunits region ORF 5 (189 aa).

A signal peptide (tat-type signal) is located at residues 1–35 (MTDTLNRRAAMALGLASAAGAALATPALSQDAAPA). In terms of domain architecture, L,D-TPase catalytic spans 59 to 189 (PMLVADTFSR…CPVGTRVRVI (131 aa)). The active-site Proton donor/acceptor is the His149. The Nucleophile role is filled by Cys165.

This sequence belongs to the YkuD family. Predicted to be exported by the Tat system. The position of the signal peptide cleavage has not been experimentally proven.

It participates in cell wall biogenesis; peptidoglycan biosynthesis. This is Putative L,D-transpeptidase in ATP synthase subunits region ORF 5 from Fuscovulum blasticum (Rhodobacter blasticus).